Consider the following 188-residue polypeptide: Putative manganese efflux pump MntP (188 aa).

6 helical membrane-spanning segments follow: residues 2–22, 39–59, 67–87, 107–127, 129–149, and 166–186; these read IMGN…AFAV, LITG…GFLL, ITAI…LNMI, IILS…FAFL, VDIV…SFLG, and LAGG…HLGF.

This sequence belongs to the MntP (TC 9.B.29) family.

The protein localises to the cell membrane. In terms of biological role, probably functions as a manganese efflux pump. The chain is Putative manganese efflux pump MntP from Desulfitobacterium hafniense (strain Y51).